A 344-amino-acid polypeptide reads, in one-letter code: uncharacterized protein (344 aa).

A coiled-coil region spans residues 221-249 (IQAQSMDEQKQIQEIYQNVEKLKEDVTKN).

The protein belongs to the IIV-6 287R family.

This is an uncharacterized protein from Aedes vexans (Inland floodwater mosquito).